Here is a 346-residue protein sequence, read N- to C-terminus: MDIKKAIAAVVERQDLSGGEMQVVMHDIMTGKATPAQIGGFLIGLRMKGETVEEITAAAQVMRSLSSKVHLDLEHVVDTCGTGGDGGNLFNVSTASAFVVASAGGKVAKHGGRSVSSKSGSADVLEQAGIYLGLDAEQVCRCVEEIGLGFMFAPNHHSAMKYAVGPRKEMATRTIFNLLGPLTNPANAKCQVMGVFHQKWVRPIAEVLKALGSEHVMVVHSEDGLDEISIAAPTYVAELKNGEILEYKISPEDFGIPLQSIDTIQAADASESLALVKMALDGKGKINPARDIVALNAGAAIYVSGIADTLAEGVNIAEDVIGGGTAKVKMSELASFTRCFMSPDSL.

5-phospho-alpha-D-ribose 1-diphosphate-binding positions include Gly-81, 84-85, 91-94, 109-117, and Ser-121; these read GD, NVST, and KHGGRSVSS. Gly-81 is an anthranilate binding site. Ser-93 serves as a coordination point for Mg(2+). Position 167 (Arg-167) interacts with anthranilate. Mg(2+) is bound by residues Asp-226 and Glu-227.

This sequence belongs to the anthranilate phosphoribosyltransferase family. In terms of assembly, homodimer. Mg(2+) serves as cofactor.

It catalyses the reaction N-(5-phospho-beta-D-ribosyl)anthranilate + diphosphate = 5-phospho-alpha-D-ribose 1-diphosphate + anthranilate. Its pathway is amino-acid biosynthesis; L-tryptophan biosynthesis; L-tryptophan from chorismate: step 2/5. Functionally, catalyzes the transfer of the phosphoribosyl group of 5-phosphorylribose-1-pyrophosphate (PRPP) to anthranilate to yield N-(5'-phosphoribosyl)-anthranilate (PRA). This Marinomonas sp. (strain MWYL1) protein is Anthranilate phosphoribosyltransferase.